The chain runs to 272 residues: Glutamate 5-kinase (272 aa).

K15 contacts ATP. S55, D142, and N158 together coordinate substrate. Residues 178 to 179 (SD) and 220 to 226 (TGGMLSK) each bind ATP.

Belongs to the glutamate 5-kinase family.

The protein resides in the cytoplasm. The enzyme catalyses L-glutamate + ATP = L-glutamyl 5-phosphate + ADP. Its pathway is amino-acid biosynthesis; L-proline biosynthesis; L-glutamate 5-semialdehyde from L-glutamate: step 1/2. Functionally, catalyzes the transfer of a phosphate group to glutamate to form L-glutamate 5-phosphate. The protein is Glutamate 5-kinase of Streptococcus equi subsp. zooepidemicus (strain H70).